Here is a 1188-residue protein sequence, read N- to C-terminus: DNA-directed RNA polymerase II subunit 2 (1188 aa).

Position 800 (Asp-800) interacts with Mg(2+). 2 disordered regions span residues 852 to 871 and 877 to 897; these read SYDK…VSGE and KTTP…TRRD. A compositionally biased stretch (polar residues) spans 879 to 892; it reads TPISQDEAQGQSSR. Residues Cys-1124, Cys-1127, Cys-1142, and Cys-1145 each contribute to the Zn(2+) site. Residues 1124–1145 form a C4-type zinc finger; sequence CEVCGLIAIANLKKNSFECRGC.

Belongs to the RNA polymerase beta chain family. In terms of assembly, component of the RNA polymerase II complex consisting of at least 12 subunits.

It localises to the nucleus. The enzyme catalyses RNA(n) + a ribonucleoside 5'-triphosphate = RNA(n+1) + diphosphate. DNA-dependent RNA polymerase catalyzes the transcription of DNA into RNA using the four ribonucleoside triphosphates as substrates. Second largest component of RNA polymerase II which synthesizes mRNA precursors and many functional non-coding RNAs. Proposed to contribute to the polymerase catalytic activity and forms the polymerase active center together with the largest subunit. Pol II is the central component of the basal RNA polymerase II transcription machinery. It is composed of mobile elements that move relative to each other. NRPB2 is part of the core element with the central large cleft, the clamp element that moves to open and close the cleft and the jaws that are thought to grab the incoming DNA template. Its function is as follows. Essential for the completion of the three rounds of mitosis in female megaspores required for the development of mature gametophytes. The polypeptide is DNA-directed RNA polymerase II subunit 2 (NRPB2) (Arabidopsis thaliana (Mouse-ear cress)).